A 256-amino-acid chain; its full sequence is Imidazole glycerol phosphate synthase subunit HisF (256 aa).

Active-site residues include Asp12 and Asp131.

This sequence belongs to the HisA/HisF family. Heterodimer of HisH and HisF.

The protein resides in the cytoplasm. The enzyme catalyses 5-[(5-phospho-1-deoxy-D-ribulos-1-ylimino)methylamino]-1-(5-phospho-beta-D-ribosyl)imidazole-4-carboxamide + L-glutamine = D-erythro-1-(imidazol-4-yl)glycerol 3-phosphate + 5-amino-1-(5-phospho-beta-D-ribosyl)imidazole-4-carboxamide + L-glutamate + H(+). It participates in amino-acid biosynthesis; L-histidine biosynthesis; L-histidine from 5-phospho-alpha-D-ribose 1-diphosphate: step 5/9. In terms of biological role, IGPS catalyzes the conversion of PRFAR and glutamine to IGP, AICAR and glutamate. The HisF subunit catalyzes the cyclization activity that produces IGP and AICAR from PRFAR using the ammonia provided by the HisH subunit. The sequence is that of Imidazole glycerol phosphate synthase subunit HisF from Bifidobacterium adolescentis (strain ATCC 15703 / DSM 20083 / NCTC 11814 / E194a).